Consider the following 579-residue polypeptide: UPF0324 membrane protein DVU_2133 (579 aa).

11 helical membrane passes run 26–45, 193–215, 225–243, 250–272, 305–327, 369–391, 401–423, 436–456, 476–495, 515–534, and 549–571; these read YWAIWLGFVILIAGMWLFLA, PFNIATSLPMLMVALGLFFAVGM, FLVGFIGVFFVAVLALMMG, YWGIGAEAWAIIIGMLVANTVGT, IGIPGIFVAWVVTPIVLICTFIF, LTLAIGLSLVFTAIMMIAMPAFI, GGAWMGGTIDATGAVAAAGAFLG, IQNVLIGVVAFGVAVYWCARV, FVLGFLAASVLFSVISGSLG, LRNWFFCLAFTSIGLATNFR, and YVAGQSFNLVLTLAMAYVMFYIV.

This sequence belongs to the UPF0324 family.

The protein resides in the cell membrane. The protein is UPF0324 membrane protein DVU_2133 of Nitratidesulfovibrio vulgaris (strain ATCC 29579 / DSM 644 / CCUG 34227 / NCIMB 8303 / VKM B-1760 / Hildenborough) (Desulfovibrio vulgaris).